Reading from the N-terminus, the 168-residue chain is Thiol peroxidase (168 aa).

A Thioredoxin domain is found at 19 to 168 (PQAGSKAQAF…YDAALNVLKA (150 aa)). Cysteine 61 (cysteine sulfenic acid (-SOH) intermediate) is an active-site residue. A disulfide bridge connects residues cysteine 61 and cysteine 95.

This sequence belongs to the peroxiredoxin family. Tpx subfamily. In terms of assembly, homodimer.

It carries out the reaction a hydroperoxide + [thioredoxin]-dithiol = an alcohol + [thioredoxin]-disulfide + H2O. Its function is as follows. Thiol-specific peroxidase that catalyzes the reduction of hydrogen peroxide and organic hydroperoxides to water and alcohols, respectively. Plays a role in cell protection against oxidative stress by detoxifying peroxides. In Salmonella typhi, this protein is Thiol peroxidase.